A 452-amino-acid chain; its full sequence is Nuclear distribution protein nudF 2 (452 aa).

Residues Ala76 to Arg101 adopt a coiled-coil conformation. WD repeat units lie at residues Ser123 to Lys164, His166 to Arg206, Gly210 to Val250, Ser253 to Ala292, Gly295 to Leu355, Gly357 to Lys396, and Ala401 to Arg449.

The protein belongs to the WD repeat LIS1/nudF family. Self-associates. Interacts with nudE and dynein.

The protein resides in the cytoplasm. It is found in the cytoskeleton. The protein localises to the spindle pole. Positively regulates the activity of the minus-end directed microtubule motor protein dynein. May enhance dynein-mediated microtubule sliding by targeting dynein to the microtubule plus end. Required for nuclear migration during vegetative growth as well as development. Required for retrograde early endosome (EE) transport from the hyphal tip. Required for localization of dynein to the mitotic spindle poles. Recruits additional proteins to the dynein complex at SPBs. This is Nuclear distribution protein nudF 2 from Talaromyces marneffei (strain ATCC 18224 / CBS 334.59 / QM 7333) (Penicillium marneffei).